The chain runs to 961 residues: FYVE, RhoGEF and PH domain-containing protein 1 (961 aa).

The span at M1–G11 shows a compositional bias: gly residues. Residues M1–R353 are disordered. Residues P27–S38 are compositionally biased toward low complexity. S48 is subject to Phosphoserine. A compositionally biased stretch (basic and acidic residues) spans P125–S135. 2 stretches are compositionally biased toward pro residues: residues G156–P165 and R172–A190. The SH3-binding motif lies at P171–P187. The span at A199–S213 shows a compositional bias: low complexity. S205 carries the post-translational modification Phosphoserine. Positions V231–Q255 are enriched in pro residues. The span at R273–G284 shows a compositional bias: basic and acidic residues. Composition is skewed to low complexity over residues I285–S294 and A316–A325. Acidic residues predominate over residues V335–K351. The DH domain occupies K373 to A561. The PH 1 domain maps to E590–L689. The tract at residues N702–T726 is disordered. At T711 the chain carries Phosphothreonine. A Phosphoserine modification is found at S715. The FYVE-type zinc finger occupies E730–H790. C736, C739, C753, C756, C761, C764, C782, and C785 together coordinate Zn(2+). The region spanning N821 to R921 is the PH 2 domain. Positions F925 to T961 are disordered.

As to quaternary structure, interacts with DBNL/ABP1 and CTTN. May interact with CCPG1. Binds CDC42. In terms of tissue distribution, expressed in fetal heart, brain, lung, kidney and placenta. Less expressed in liver; adult heart, brain, lung, pancreas and skeletal muscle.

The protein resides in the cytoplasm. The protein localises to the cell projection. Its subcellular location is the lamellipodium. It localises to the ruffle. It is found in the cytoskeleton. In terms of biological role, activates CDC42, a member of the Ras-like family of Rho- and Rac proteins, by exchanging bound GDP for free GTP. Plays a role in regulating the actin cytoskeleton and cell shape. The sequence is that of FYVE, RhoGEF and PH domain-containing protein 1 (FGD1) from Homo sapiens (Human).